Consider the following 433-residue polypeptide: Pyrimidine-nucleoside phosphorylase (433 aa).

Phosphate is bound at residue 81–83; it reads KHS. Positions 88 and 90 each coordinate K(+). Residues Thr-92, 108–110, and Thr-120 contribute to the phosphate site; that span reads KMS. 2 residues coordinate substrate: Arg-168 and Lys-187. Positions 243, 246, and 255 each coordinate K(+).

It belongs to the thymidine/pyrimidine-nucleoside phosphorylase family. Homodimer. Requires K(+) as cofactor.

The enzyme catalyses uridine + phosphate = alpha-D-ribose 1-phosphate + uracil. It catalyses the reaction thymidine + phosphate = 2-deoxy-alpha-D-ribose 1-phosphate + thymine. It carries out the reaction 2'-deoxyuridine + phosphate = 2-deoxy-alpha-D-ribose 1-phosphate + uracil. Functionally, catalyzes phosphorolysis of the pyrimidine nucleosides uridine, thymidine and 2'-deoxyuridine with the formation of the corresponding pyrimidine base and ribose-1-phosphate. The chain is Pyrimidine-nucleoside phosphorylase (pdp) from Staphylococcus aureus (strain Mu50 / ATCC 700699).